The following is a 524-amino-acid chain: Chitinase D (524 aa).

The signal sequence occupies residues 1-30; sequence MNQAVRFRPVITFALAFILIITWFAPRADA. Positions 95 to 180 constitute a Fibronectin type-III domain; sequence VPAGLTSSLV…TSLSVTTSTG (86 aa). The 325-residue stretch at 190-514 folds into the GH18 domain; the sequence is KWLIGYWHNF…NAHRPFLNGL (325 aa). The active-site Proton donor is the E303.

This sequence belongs to the glycosyl hydrolase 18 family. Chitinase class II subfamily.

The enzyme catalyses Random endo-hydrolysis of N-acetyl-beta-D-glucosaminide (1-&gt;4)-beta-linkages in chitin and chitodextrins.. The polypeptide is Chitinase D (chiD) (Niallia circulans (Bacillus circulans)).